The chain runs to 292 residues: 4-hydroxy-tetrahydrodipicolinate synthase (292 aa).

Position 45 (Thr-45) interacts with pyruvate. Tyr-133 functions as the Proton donor/acceptor in the catalytic mechanism. Lys-161 serves as the catalytic Schiff-base intermediate with substrate. Residue Ile-203 participates in pyruvate binding.

This sequence belongs to the DapA family. As to quaternary structure, homodimer.

Its subcellular location is the cytoplasm. The enzyme catalyses L-aspartate 4-semialdehyde + pyruvate = (2S,4S)-4-hydroxy-2,3,4,5-tetrahydrodipicolinate + H2O + H(+). Its pathway is amino-acid biosynthesis; L-lysine biosynthesis via DAP pathway; (S)-tetrahydrodipicolinate from L-aspartate: step 3/4. Its function is as follows. Catalyzes the condensation of (S)-aspartate-beta-semialdehyde [(S)-ASA] and pyruvate to 4-hydroxy-tetrahydrodipicolinate (HTPA). This Pseudomonas putida (strain W619) protein is 4-hydroxy-tetrahydrodipicolinate synthase.